Consider the following 263-residue polypeptide: Type-2Ba cytolytic delta-endotoxin (263 aa).

Belongs to the cyt1/cyt2 endotoxin family. Active after proteolytic processing.

Its function is as follows. Kills the larvae of dipteran insects by making pores in the epithelial cell membrane of the insect midgut. The sequence is that of Type-2Ba cytolytic delta-endotoxin (cyt2Ba1) from Bacillus thuringiensis subsp. israelensis.